The sequence spans 423 residues: Inactive autotransporter heptosyltransferase BimC (423 aa).

The segment covering M1–A10 has biased composition (polar residues). Residues M1–P49 are disordered. Fe(3+)-binding residues include C371, C374, C390, and C402.

It belongs to the glycosyltransferase 9 family. In terms of assembly, homotrimer or homotetramer. Requires Fe(3+) as cofactor.

The protein localises to the cell inner membrane. It is found in the cytoplasm. Its function is as follows. Iron-binding protein which is required for the asymmetric polar distribution of the autotransporter BimA on the bacterial surface prior to its translocation into bacterial periplasm. Lacks heptosyltransferase activity. The sequence is that of Inactive autotransporter heptosyltransferase BimC from Burkholderia thailandensis (strain ATCC 700388 / DSM 13276 / CCUG 48851 / CIP 106301 / E264).